Reading from the N-terminus, the 850-residue chain is G-type lectin S-receptor-like serine/threonine-protein kinase CES101 (850 aa).

Residues 1-22 (MWSNCIFLTLFTFYLFLGQSCC) form the signal peptide. Topologically, residues 23-423 (QTDTLLQGQY…IKGSKLAATW (401 aa)) are extracellular. A Bulb-type lectin domain is found at 24-144 (TDTLLQGQYL…DSDGSMKRTL (121 aa)). N-linked (GlcNAc...) asparagine glycosylation is found at N55, N118, N194, and N374. In terms of domain architecture, PAN spans 334–416 (CSRFGYTFRE…PRTIYIRIKG (83 aa)). 2 disulfide bridges follow: C367-C390 and C371-C377. A helical membrane pass occupies residues 424-444 (LVVVASLFLIIPVTWLIIYLV). The Cytoplasmic portion of the chain corresponds to 445 to 850 (LRKFKIKGTN…RVTITVMEAR (406 aa)). The 290-residue stretch at 527 to 816 (FSDANKLGEG…ALSLPKEPAF (290 aa)) folds into the Protein kinase domain. Residues 533 to 541 (LGEGGFGPV) and K555 contribute to the ATP site. Position 561 is a phosphoserine (S561). The caM-binding stretch occupies residues 616–633 (LRKIVLDWKLRFRIMEGI). The active-site Proton acceptor is D652. Position 669 is a phosphoserine (S669). T686 carries the post-translational modification Phosphothreonine. Phosphoserine occurs at positions 730 and 838. Residue T845 is modified to Phosphothreonine.

Belongs to the protein kinase superfamily. Ser/Thr protein kinase family. Mostly expressed in leaves, and, to a lower extent, in roots and flowers.

The protein resides in the cell membrane. It catalyses the reaction L-seryl-[protein] + ATP = O-phospho-L-seryl-[protein] + ADP + H(+). The catalysed reaction is L-threonyl-[protein] + ATP = O-phospho-L-threonyl-[protein] + ADP + H(+). In terms of biological role, promotes the expression of genes involved in photosynthesis at least in dedifferentiated calli. This chain is G-type lectin S-receptor-like serine/threonine-protein kinase CES101 (CES101), found in Arabidopsis thaliana (Mouse-ear cress).